An 81-amino-acid chain; its full sequence is Putative membrane protein insertion efficiency factor (81 aa).

Positions 61 to 81 are disordered; it reads NDGGFDPVPPAPSSRTSSIAE.

Belongs to the UPF0161 family.

It localises to the cell inner membrane. Its function is as follows. Could be involved in insertion of integral membrane proteins into the membrane. In Pseudomonas putida (strain ATCC 700007 / DSM 6899 / JCM 31910 / BCRC 17059 / LMG 24140 / F1), this protein is Putative membrane protein insertion efficiency factor.